Reading from the N-terminus, the 748-residue chain is Cysteine--tRNA ligase, cytoplasmic (748 aa).

The disordered stretch occupies residues 1 to 25 (MAAAPAEQGKGKRVQPPWSPPEGTK). Cys-55 serves as a coordination point for Zn(2+). Gly-56 is an L-cysteine binding site. Residues 57–67 (PTVYDASHMGH) carry the 'HIGH' region motif. An L-cysteine-binding site is contributed by Thr-96. Residues 101–104 (KIIK) carry the 'KIIK' region motif. Positions 348, 373, and 377 each coordinate Zn(2+). L-cysteine is bound at residue His-373. Residues 406 to 410 (KMSKS) carry the 'KMSKS' region motif. An ATP-binding site is contributed by Lys-409. Basic and acidic residues-rich tracts occupy residues 656–679 (KIEE…EAAK) and 686–717 (PPHE…KELS). The tract at residues 656–719 (KIEEEKKRKK…DTEGKELSKG (64 aa)) is disordered.

The protein belongs to the class-I aminoacyl-tRNA synthetase family. As to quaternary structure, homodimer. Zn(2+) is required as a cofactor.

Its subcellular location is the cytoplasm. It catalyses the reaction tRNA(Cys) + L-cysteine + ATP = L-cysteinyl-tRNA(Cys) + AMP + diphosphate. Functionally, catalyzes the ATP-dependent ligation of cysteine to tRNA(Cys). In Gallus gallus (Chicken), this protein is Cysteine--tRNA ligase, cytoplasmic (CARS1).